Consider the following 666-residue polypeptide: Endogenous retrovirus group K member 7 Gag polyprotein (666 aa).

Gly-2 carries N-myristoyl glycine lipidation. Disordered regions lie at residues 165-205 (GKGP…NKTQ) and 217-264 (ELQY…GSEL). Positions 232 to 247 (GMPPAPQGRAPYPQPP) are enriched in pro residues. 2 consecutive CCHC-type zinc fingers follow at residues 544–561 (GKCYNCGQIGHLKKNCPV) and 580–597 (DLCPRCKKGKHWASQCRS). Residues 598-641 (KFDKNGQPLSGNEQRGQPQAPQQTGAFPIQPFVPQGFQEQQPPL) form a disordered region. A compositionally biased stretch (polar residues) spans 604-622 (QPLSGNEQRGQPQAPQQTG).

The protein belongs to the beta type-B retroviral Gag protein family. HERV class-II K(HML-2) gag subfamily. Post-translationally, specific enzymatic cleavages may yield mature proteins. Myristoylation is essential for retroviral assembly. Alteration of the glycine residue leads to a block in the budding of particles and an accumulation of Gag inside the cell.

The protein resides in the cell membrane. Functionally, the products of the Gag polyproteins of infectious retroviruses perform highly complex orchestrated tasks during the assembly, budding, maturation, and infection stages of the viral replication cycle. During viral assembly, the proteins form membrane associations and self-associations that ultimately result in budding of an immature virion from the infected cell. Gag precursors also function during viral assembly to selectively bind and package two plus strands of genomic RNA. Endogenous Gag proteins may have kept, lost or modified their original function during evolution. In Homo sapiens (Human), this protein is Endogenous retrovirus group K member 7 Gag polyprotein (ERVK-7).